The following is a 504-amino-acid chain: Cytochrome P450 6B6 (504 aa).

Residue Cys-445 coordinates heme.

Belongs to the cytochrome P450 family. Heme serves as cofactor.

The protein resides in the endoplasmic reticulum membrane. It localises to the microsome membrane. The enzyme catalyses an organic molecule + reduced [NADPH--hemoprotein reductase] + O2 = an alcohol + oxidized [NADPH--hemoprotein reductase] + H2O + H(+). This is Cytochrome P450 6B6 (CYP6B6) from Helicoverpa armigera (Cotton bollworm).